The following is a 1055-amino-acid chain: SMC5-SMC6 complex localization factor protein 1 (1055 aa).

BRCT domains lie at glutamate 2 to glycine 80 and proline 121 to lysine 199. The tract at residues lysine 312–threonine 332 is disordered. The segment covering lysine 318–threonine 332 has biased composition (basic and acidic residues). Residues proline 407–serine 1055 form an NSE5-like domain; mediates interaction with SLF2 region. ANK repeat units follow at residues lysine 804–valine 834, alanine 838–leucine 867, and aspartate 872–leucine 901. A Glycyl lysine isopeptide (Lys-Gly) (interchain with G-Cter in SUMO2) cross-link involves residue lysine 929.

In terms of assembly, interacts (via N-terminus) with SLF2; this interaction links RAD18 to the SMC5-SMC6 complex. Interacts (via BRCT domains) with RAD18; this interaction occurs in a SLF2-independent manner. Interacts with SMC6. Interacts (via BRCT domains) with RAD18 (via C-terminus and phosphorylated form); this interaction is required for efficient repair of UV-induced DNA damage.

It is found in the nucleus. The protein resides in the cytoplasm. Its subcellular location is the cytoskeleton. It localises to the microtubule organizing center. The protein localises to the centrosome. Plays a role in the DNA damage response (DDR) pathway by regulating postreplication repair of UV-damaged DNA and genomic stability maintenance. The SLF1-SLF2 complex acts to link RAD18 with the SMC5-SMC6 complex at replication-coupled interstrand cross-links (ICL) and DNA double-strand breaks (DSBs) sites on chromatin during DNA repair in response to stalled replication forks. Promotes the recruitment of SLF2 and the SMC5-SMC6 complex to DNA lesions. The sequence is that of SMC5-SMC6 complex localization factor protein 1 from Bos taurus (Bovine).